The sequence spans 197 residues: Dephospho-CoA kinase (197 aa).

Residues 2-197 (IIGLTGGIAS…GAIKDLANLV (196 aa)) enclose the DPCK domain. Position 10 to 15 (10 to 15 (ASGKST)) interacts with ATP.

It belongs to the CoaE family.

It is found in the cytoplasm. It catalyses the reaction 3'-dephospho-CoA + ATP = ADP + CoA + H(+). It functions in the pathway cofactor biosynthesis; coenzyme A biosynthesis; CoA from (R)-pantothenate: step 5/5. Its function is as follows. Catalyzes the phosphorylation of the 3'-hydroxyl group of dephosphocoenzyme A to form coenzyme A. In Streptococcus thermophilus (strain CNRZ 1066), this protein is Dephospho-CoA kinase.